Consider the following 556-residue polypeptide: mRNA-capping enzyme subunit beta (556 aa).

Disordered stretches follow at residues 1–28 and 56–217; these read MKPS…DNNV and LPPV…QKTS. The span at 63–74 shows a compositional bias: polar residues; that stretch reads VSTSDTGNTSHT. Residues 85 to 96 are compositionally biased toward acidic residues; that stretch reads ESDETDTDDEPG. Basic and acidic residues-rich tracts occupy residues 103–131 and 139–212; these read TKFR…KDKQ and IQLD…KDIF.

It belongs to the fungal TPase family. As to quaternary structure, heterodimer. The mRNA-capping enzyme is composed of two separate chains alpha and beta, respectively a mRNA guanylyltransferase and an mRNA 5'-triphosphate monophosphatase. The cofactor is Mg(2+).

The protein resides in the nucleus. The catalysed reaction is a 5'-end triphospho-ribonucleoside in mRNA + H2O = a 5'-end diphospho-ribonucleoside in mRNA + phosphate + H(+). First step of mRNA capping. Converts the 5'-triphosphate end of a nascent mRNA chain into a diphosphate end. The protein is mRNA-capping enzyme subunit beta (CET1) of Kluyveromyces lactis (strain ATCC 8585 / CBS 2359 / DSM 70799 / NBRC 1267 / NRRL Y-1140 / WM37) (Yeast).